The following is a 343-amino-acid chain: S-adenosylmethionine:tRNA ribosyltransferase-isomerase (343 aa).

Belongs to the QueA family. In terms of assembly, monomer.

It is found in the cytoplasm. The enzyme catalyses 7-aminomethyl-7-carbaguanosine(34) in tRNA + S-adenosyl-L-methionine = epoxyqueuosine(34) in tRNA + adenine + L-methionine + 2 H(+). Its pathway is tRNA modification; tRNA-queuosine biosynthesis. Functionally, transfers and isomerizes the ribose moiety from AdoMet to the 7-aminomethyl group of 7-deazaguanine (preQ1-tRNA) to give epoxyqueuosine (oQ-tRNA). This chain is S-adenosylmethionine:tRNA ribosyltransferase-isomerase, found in Coxiella burnetii (strain RSA 331 / Henzerling II).